Here is a 1791-residue protein sequence, read N- to C-terminus: Protein TIC 214 (1791 aa).

The next 6 membrane-spanning stretches (helical) occupy residues 19-39 (IINS…FSIG), 68-88 (FIAG…HLAL), 91-111 (PHTI…WNNH), 133-153 (VFLN…SSML), 176-196 (VGWL…LVWI), and 227-247 (IFSI…PSPI). Residues 1492–1511 (ASQVELESDKENKKNPESAL) are disordered. A compositionally biased stretch (basic and acidic residues) spans 1498–1511 (ESDKENKKNPESAL).

The protein belongs to the TIC214 family. In terms of assembly, part of the Tic complex.

Its subcellular location is the plastid. The protein resides in the chloroplast inner membrane. Involved in protein precursor import into chloroplasts. May be part of an intermediate translocation complex acting as a protein-conducting channel at the inner envelope. The sequence is that of Protein TIC 214 from Barbarea verna (Land cress).